A 317-amino-acid chain; its full sequence is Osteopontin (317 aa).

A signal peptide spans 1–16; the sequence is MRLAVVCFCLFGLASC. 5 positions are modified to phosphoserine: Ser-26, Ser-27, Ser-60, Ser-62, and Ser-63. A disordered region spans residues 43–297; the sequence is WLKPDPSQKQ…LVLDPKSKED (255 aa). Residues 49–63 are compositionally biased toward polar residues; the sequence is SQKQNLLAPQNSVSS. Thr-66 is subject to Phosphothreonine. A phosphoserine mark is found at Ser-76, Ser-78, Ser-81, Ser-106, Ser-109, Ser-112, Ser-115, and Ser-118. Acidic residues predominate over residues 86-110; that stretch reads DDDDDDDDDGDHAESEDSVNSDESD. Residues Thr-123, Thr-132, and Thr-137 are each glycosylated (O-linked (GalNAc...) threonine). A Cell attachment site motif is present at residues 144-146; that stretch reads RGD. A phosphothreonine mark is found at Thr-170 and Thr-175. Positions 174–187 are enriched in basic and acidic residues; it reads LTSRMKSQESDEAI. Phosphoserine is present on residues Ser-176, Ser-180, Ser-200, Ser-204, Ser-209, Ser-213, and Ser-219. Polar residues predominate over residues 197 to 216; that stretch reads SVPSDQDSNGKTSHESSQLD. Ser-219 is a glycosylation site (O-linked (Xyl...) (chondroitin sulfate) serine). A Phosphothreonine modification is found at Thr-222. Basic and acidic residues-rich tracts occupy residues 223–240 and 248–263; these read HSLEQSKEYKQRASHEST and SAEKPDAIDSAERSDA. 14 positions are modified to phosphoserine: Ser-224, Ser-228, Ser-257, Ser-261, Ser-266, Ser-270, Ser-273, Ser-278, Ser-283, Ser-294, Ser-306, Ser-311, Ser-313, and Ser-314. Residues 273–297 show a composition bias toward basic and acidic residues; it reads SLEHQSHEFHSHEDKLVLDPKSKED. O-linked (Xyl...) (chondroitin sulfate) serine glycosylation is present at Ser-311.

This sequence belongs to the osteopontin family. Interacts (via N-terminus) with integrin ITGA9:ITGB1. Post-translationally, extensively phosphorylated by FAM20C in the extracellular medium at multiple sites within the S-x-E/pS motif. The phosphorylated form inhibits hydroxyapatite crystallization. Dephosphorylation via a mechanism involving ALPL/TNAP promotes hydroxyapatite crystallization. In terms of processing, O-glycosylated. Forms covalent cross-links mediated by transglutaminase TGM2, between a glutamine and the epsilon-amino group of a lysine residue, forming homopolymers and heteropolymers, increasing its collagen binding properties.

The protein resides in the secreted. Major non-collagenous bone protein that binds tightly to hydroxyapatite. Appears to form an integral part of the mineralized matrix. Probably important to cell-matrix interaction. Its function is as follows. Acts as a cytokine involved in enhancing production of interferon-gamma and interleukin-12 and reducing production of interleukin-10 and is essential in the pathway that leads to type I immunity. This Rattus norvegicus (Rat) protein is Osteopontin (Spp1).